Reading from the N-terminus, the 1039-residue chain is 3',5'-cyclic-AMP phosphodiesterase 4 (1039 aa).

A signal peptide spans 1–29; that stretch reads MFNNNNNDKINNTMMSNNPSGQIINLESI. N11, N34, and N37 each carry an N-linked (GlcNAc...) asparagine glycan. Over 30–201 the chain is Extracellular; the sequence is DCNSNLSNTT…KKKVNAESLR (172 aa). 2 disordered regions span residues 40 to 63 and 116 to 181; these read SIKD…NNIN and IIPN…NNSI. Residues 45-63 are compositionally biased toward low complexity; that stretch reads NNNNNNNNNNNNNINNNIN. Residues N119, N124, N131, N167, and N178 are each glycosylated (N-linked (GlcNAc...) asparagine). A helical transmembrane segment spans residues 202-222; it reads GPIIFQNFILYTFFLIVIGTA. Residues 223 to 226 are Cytoplasmic-facing; it reads EGTS. Residues 227 to 247 traverse the membrane as a helical segment; it reads WAPEIRVANFVPYCVMCVVLL. Residues 248-256 lie on the Extracellular side of the membrane; that stretch reads EFNRLHKKP. The helical transmembrane segment at 257 to 277 threads the bilayer; the sequence is LLRIIFPLYTSNIPFAYMCIF. Topologically, residues 278 to 283 are cytoplasmic; the sequence is SREARK. Residues 284-304 form a helical membrane-spanning segment; the sequence is YVLISLLFFASCLCIFLQSGI. Residues 305–310 are Extracellular-facing; sequence PDLRKH. Residues 311–331 traverse the membrane as a helical segment; that stretch reads IVIFCIIFMINYGCCILFMDW. The Cytoplasmic segment spans residues 332–356; the sequence is FYIDTTGTKPYRGRILATKIHWGEE. A helical membrane pass occupies residues 357–377; sequence ATILVSMALLGCIFIVLEKFI. Over 378–1039 the chain is Extracellular; sequence KSYARCVAEQ…LTQSNYLIVV (662 aa). Residues 384-414 are a coiled coil; sequence VAEQHYQIQCLQKEKEKLQTEINISLKKLDL. N-linked (GlcNAc...) asparagine glycans are attached at residues N406, N430, N500, and N515. The PDEase domain maps to 533 to 973; that stretch reads PEITDQGIQE…QQLQQQQQQQ (441 aa). Catalysis depends on H609, which acts as the Proton donor. Positions 613, 648, and 649 each coordinate a divalent metal cation. The disordered stretch occupies residues 738 to 835; it reads FPTTTNTQQP…NNSNSNNQNQ (98 aa). Residues 740–835 show a composition bias toward low complexity; the sequence is TTTNTQQPSS…NNSNSNNQNQ (96 aa). Residues N769, N791, N795, N804, N809, N823, and N826 are each glycosylated (N-linked (GlcNAc...) asparagine). D861 contacts a divalent metal cation. N874, N944, N1018, and N1023 each carry an N-linked (GlcNAc...) asparagine glycan. Residues 978-1019 show a composition bias toward low complexity; the sequence is QQQQQQLHHHQQQQQFQHQQHQQQLQHQHQQQLNNQNQNQNQ. The tract at residues 978–1033 is disordered; it reads QQQQQQLHHHQQQQQFQHQQHQQQLQHQHQQQLNNQNQNQNQSNSNNSNSFGLTQS. Over residues 1020-1033 the composition is skewed to polar residues; that stretch reads SNSNNSNSFGLTQS.

The protein belongs to the cyclic nucleotide phosphodiesterase family. A divalent metal cation is required as a cofactor.

It is found in the cell membrane. It carries out the reaction 3',5'-cyclic AMP + H2O = AMP + H(+). With respect to regulation, inhibited by 3-isobutyl-1-methylxanthine (IBMX). Functionally, phosphodiesterase specific for extracellular cAMP. Involved in the degradation of extracellular cAMP specifically during multicellular development. The polypeptide is 3',5'-cyclic-AMP phosphodiesterase 4 (Pde4) (Dictyostelium discoideum (Social amoeba)).